Consider the following 199-residue polypeptide: Probable GTP-binding protein EngB (199 aa).

The 172-residue stretch at 28–199 (DLPEIALAGR…DSWDAILEQV (172 aa)) folds into the EngB-type G domain. Residues 36–43 (GRSNVGKS), 63–67 (GKTQL), 81–84 (DVPG), 148–151 (TKAD), and 180–182 (FSS) contribute to the GTP site. Mg(2+)-binding residues include serine 43 and threonine 65.

The protein belongs to the TRAFAC class TrmE-Era-EngA-EngB-Septin-like GTPase superfamily. EngB GTPase family. Mg(2+) serves as cofactor.

Its function is as follows. Necessary for normal cell division and for the maintenance of normal septation. The chain is Probable GTP-binding protein EngB from Streptococcus pyogenes serotype M3 (strain SSI-1).